The primary structure comprises 316 residues: Aspartate carbamoyltransferase catalytic subunit (316 aa).

Carbamoyl phosphate is bound by residues R58 and T59. Residue K86 coordinates L-aspartate. 3 residues coordinate carbamoyl phosphate: R108, H136, and Q139. The L-aspartate site is built by R169 and R223. 2 residues coordinate carbamoyl phosphate: G265 and P266.

Belongs to the aspartate/ornithine carbamoyltransferase superfamily. ATCase family. Heterododecamer (2C3:3R2) of six catalytic PyrB chains organized as two trimers (C3), and six regulatory PyrI chains organized as three dimers (R2).

The catalysed reaction is carbamoyl phosphate + L-aspartate = N-carbamoyl-L-aspartate + phosphate + H(+). The protein operates within pyrimidine metabolism; UMP biosynthesis via de novo pathway; (S)-dihydroorotate from bicarbonate: step 2/3. Its function is as follows. Catalyzes the condensation of carbamoyl phosphate and aspartate to form carbamoyl aspartate and inorganic phosphate, the committed step in the de novo pyrimidine nucleotide biosynthesis pathway. The sequence is that of Aspartate carbamoyltransferase catalytic subunit from Anaeromyxobacter sp. (strain Fw109-5).